The primary structure comprises 220 residues: Deoxyribose-phosphate aldolase (220 aa).

Asp89 (proton donor/acceptor) is an active-site residue. The active-site Schiff-base intermediate with acetaldehyde is the Lys151. The active-site Proton donor/acceptor is the Lys180.

The protein belongs to the DeoC/FbaB aldolase family. DeoC type 1 subfamily.

It is found in the cytoplasm. It carries out the reaction 2-deoxy-D-ribose 5-phosphate = D-glyceraldehyde 3-phosphate + acetaldehyde. The protein operates within carbohydrate degradation; 2-deoxy-D-ribose 1-phosphate degradation; D-glyceraldehyde 3-phosphate and acetaldehyde from 2-deoxy-alpha-D-ribose 1-phosphate: step 2/2. Its function is as follows. Catalyzes a reversible aldol reaction between acetaldehyde and D-glyceraldehyde 3-phosphate to generate 2-deoxy-D-ribose 5-phosphate. This is Deoxyribose-phosphate aldolase from Streptococcus equi subsp. equi (strain 4047).